A 353-amino-acid chain; its full sequence is tRNA N6-adenosine threonylcarbamoyltransferase (353 aa).

Fe cation is bound by residues histidine 109 and histidine 113. Substrate is bound by residues 136–140 (TVSGG), aspartate 169, glycine 182, aspartate 186, and asparagine 284. Residue aspartate 312 participates in Fe cation binding.

This sequence belongs to the KAE1 / TsaD family. It depends on Fe(2+) as a cofactor.

The protein localises to the cytoplasm. It catalyses the reaction L-threonylcarbamoyladenylate + adenosine(37) in tRNA = N(6)-L-threonylcarbamoyladenosine(37) in tRNA + AMP + H(+). In terms of biological role, required for the formation of a threonylcarbamoyl group on adenosine at position 37 (t(6)A37) in tRNAs that read codons beginning with adenine. Is involved in the transfer of the threonylcarbamoyl moiety of threonylcarbamoyl-AMP (TC-AMP) to the N6 group of A37, together with TsaE and TsaB. TsaD likely plays a direct catalytic role in this reaction. This chain is tRNA N6-adenosine threonylcarbamoyltransferase, found in Chlorobium phaeobacteroides (strain DSM 266 / SMG 266 / 2430).